Consider the following 296-residue polypeptide: NAD kinase (296 aa).

Asp-74 functions as the Proton acceptor in the catalytic mechanism. NAD(+) is bound by residues 74 to 75 (DG), 148 to 149 (ND), Arg-176, Asp-178, and 189 to 194 (TAYALS).

The protein belongs to the NAD kinase family. Requires a divalent metal cation as cofactor.

It localises to the cytoplasm. It carries out the reaction NAD(+) + ATP = ADP + NADP(+) + H(+). Involved in the regulation of the intracellular balance of NAD and NADP, and is a key enzyme in the biosynthesis of NADP. Catalyzes specifically the phosphorylation on 2'-hydroxyl of the adenosine moiety of NAD to yield NADP. The chain is NAD kinase from Nitrosomonas eutropha (strain DSM 101675 / C91 / Nm57).